The primary structure comprises 335 residues: Transcription factor bHLH63 (335 aa).

Residues 110–160 (MTMNRDDLVEEGEEEKSKITEQNNGSTKSIKKMKHKAKKEENNFSNDSSKV) are disordered. In terms of domain architecture, bHLH spans 178 to 228 (QATDSHSIAERVRREKISERMKFLQDLVPGCDKITGKAGMLDEIINYVQSL).

As to quaternary structure, homodimer. Interacts with IBH1. Binds reversibly to CRY2 after blue light illumination. In terms of tissue distribution, expressed constitutively in roots, leaves, and stems.

It is found in the nucleus. Its function is as follows. Transcription factor that binds DNA to G box 5'-CACGTG-3' and, to a lower extent, to E-box 5'-CANNTG-3' in vitro. Binds to chromatin DNA of the FT gene and promotes its expression, and thus triggers flowering in response to blue light. The protein is Transcription factor bHLH63 (BHLH63) of Arabidopsis thaliana (Mouse-ear cress).